The chain runs to 456 residues: Putative F-box/FBD/LRR-repeat protein At1g66300 (456 aa).

The disordered stretch occupies residues 1-23 (MDEDGEKRVRTKRLCSPESSDKK). Residues 28 to 74 (VDWVRDLPESLICHVLLNLSTKDVIKNCVLSTKWRYLWRYVPGLDLD) form the F-box domain. 4 LRR repeats span residues 136–163 (HLDL…KLCG), 185–210 (VKFA…TLCR), 234–260 (PNTM…TLSH), and 347–372 (FYED…VVGS). The FBD domain occupies 377 to 429 (MERTSIISGHRCLLSSLEYVEIETPLTGEVFEMKLVSYLLENSPILKKLTIHL).

This chain is Putative F-box/FBD/LRR-repeat protein At1g66300, found in Arabidopsis thaliana (Mouse-ear cress).